The sequence spans 260 residues: Coiled-coil domain-containing protein 127 (260 aa).

Residues 47 to 135 (ESQKEIEKAR…QIIQEKSQRQ (89 aa)) are a coiled coil.

This is Coiled-coil domain-containing protein 127 (Ccdc127) from Rattus norvegicus (Rat).